Consider the following 340-residue polypeptide: Selenide, water dikinase (340 aa).

Selenocysteine 17 is an active-site residue. Position 17 (selenocysteine 17) is a non-standard amino acid, selenocysteine. Residues lysine 20 and asparagine 45–glutamate 47 contribute to the ATP site. Aspartate 48 is a Mg(2+) binding site. Residues aspartate 65, aspartate 88, and glycine 136–threonine 138 contribute to the ATP site. Residue aspartate 88 coordinates Mg(2+). Aspartate 224 contributes to the Mg(2+) binding site.

This sequence belongs to the selenophosphate synthase 1 family. Class I subfamily. As to quaternary structure, homodimer. The cofactor is Mg(2+).

The catalysed reaction is hydrogenselenide + ATP + H2O = selenophosphate + AMP + phosphate + 2 H(+). Functionally, synthesizes selenophosphate from selenide and ATP. The chain is Selenide, water dikinase from Campylobacter jejuni subsp. jejuni serotype O:2 (strain ATCC 700819 / NCTC 11168).